We begin with the raw amino-acid sequence, 308 residues long: 4-hydroxy-3-methylbut-2-enyl diphosphate reductase 2 (308 aa).

Cys12 serves as a coordination point for [4Fe-4S] cluster. (2E)-4-hydroxy-3-methylbut-2-enyl diphosphate is bound by residues His41 and His74. Dimethylallyl diphosphate-binding residues include His41 and His74. Residues His41 and His74 each coordinate isopentenyl diphosphate. Cys96 provides a ligand contact to [4Fe-4S] cluster. His124 contributes to the (2E)-4-hydroxy-3-methylbut-2-enyl diphosphate binding site. His124 provides a ligand contact to dimethylallyl diphosphate. His124 contacts isopentenyl diphosphate. The Proton donor role is filled by Glu126. Residue Thr164 coordinates (2E)-4-hydroxy-3-methylbut-2-enyl diphosphate. Residue Cys194 coordinates [4Fe-4S] cluster. (2E)-4-hydroxy-3-methylbut-2-enyl diphosphate-binding residues include Ser222, Ser223, Asn224, and Ser266. Dimethylallyl diphosphate contacts are provided by Ser222, Ser223, Asn224, and Ser266. Residues Ser222, Ser223, Asn224, and Ser266 each contribute to the isopentenyl diphosphate site.

The protein belongs to the IspH family. [4Fe-4S] cluster is required as a cofactor.

It carries out the reaction isopentenyl diphosphate + 2 oxidized [2Fe-2S]-[ferredoxin] + H2O = (2E)-4-hydroxy-3-methylbut-2-enyl diphosphate + 2 reduced [2Fe-2S]-[ferredoxin] + 2 H(+). It catalyses the reaction dimethylallyl diphosphate + 2 oxidized [2Fe-2S]-[ferredoxin] + H2O = (2E)-4-hydroxy-3-methylbut-2-enyl diphosphate + 2 reduced [2Fe-2S]-[ferredoxin] + 2 H(+). Its pathway is isoprenoid biosynthesis; dimethylallyl diphosphate biosynthesis; dimethylallyl diphosphate from (2E)-4-hydroxy-3-methylbutenyl diphosphate: step 1/1. It participates in isoprenoid biosynthesis; isopentenyl diphosphate biosynthesis via DXP pathway; isopentenyl diphosphate from 1-deoxy-D-xylulose 5-phosphate: step 6/6. Functionally, catalyzes the conversion of 1-hydroxy-2-methyl-2-(E)-butenyl 4-diphosphate (HMBPP) into a mixture of isopentenyl diphosphate (IPP) and dimethylallyl diphosphate (DMAPP). Acts in the terminal step of the DOXP/MEP pathway for isoprenoid precursor biosynthesis. The sequence is that of 4-hydroxy-3-methylbut-2-enyl diphosphate reductase 2 from Bradyrhizobium diazoefficiens (strain JCM 10833 / BCRC 13528 / IAM 13628 / NBRC 14792 / USDA 110).